We begin with the raw amino-acid sequence, 892 residues long: Alpha-actinin-1 (892 aa).

Methionine 1 bears the N-acetylmethionine mark. Residues 1-247 (MDHYDSQQTN…IMTYVSSFYH (247 aa)) form an actin-binding region. Residue serine 6 is modified to Phosphoserine. At tyrosine 12 the chain carries Phosphotyrosine; by FAK1. Calponin-homology (CH) domains follow at residues 31–135 (KQQR…LRFA) and 144–250 (TSAK…HAFS). N6-acetyllysine is present on residues lysine 95 and lysine 195. Spectrin repeat units follow at residues 274-384 (QLME…WLLN), 394-499 (HLAE…ALER), 509-620 (QLYL…ALTE), and 630-733 (RLRK…EVEN). Residues 274 to 733 (QLMEDYEKLA…IARTINEVEN (460 aa)) are interaction with DDN. Serine 471 is subject to Phosphoserine. N6-acetyllysine is present on lysine 676. Serine 677 is modified (phosphoserine). 2 EF-hand domains span residues 746–781 (EQMN…LGYD) and 787–822 (QGEA…ETAD). Ca(2+) is bound by residues aspartate 759, aspartate 761, serine 763, threonine 765, and glutamate 770. At serine 890 the chain carries Phosphoserine.

This sequence belongs to the alpha-actinin family. Homodimer; antiparallel. Interacts with MYOZ2, TTID and LPP. Interacts with DDN. Interacts with PSD. Interacts with MICALL2. Interacts with DNM2 and CTTN. Interacts with PDLIM1. Interacts with PDLIM2. Interacts with PDLIM4 (via PDZ domain). Interacts with IGSF8.

It localises to the cytoplasm. The protein localises to the cytoskeleton. The protein resides in the myofibril. It is found in the sarcomere. Its subcellular location is the z line. It localises to the cell membrane. The protein localises to the cell junction. The protein resides in the cell projection. It is found in the ruffle. Its function is as follows. F-actin cross-linking protein which is thought to anchor actin to a variety of intracellular structures. Association with IGSF8 regulates the immune synapse formation and is required for efficient T-cell activation. The chain is Alpha-actinin-1 (Actn1) from Mus musculus (Mouse).